The sequence spans 486 residues: Dipeptide and tripeptide permease B (486 aa).

The Cytoplasmic portion of the chain corresponds to 1–27 (MNKPVSIGLLQQPKPFFMIFFVELWER). Residues 28–48 (FGYYGVQGVLTVYFVQKLGFS) form a helical membrane-spanning segment. Over 49 to 52 (QEQA) the chain is Periplasmic. The chain crosses the membrane as a helical span at residues 53–73 (FITFGAFAALVFGLISIGGYV). Residues 74 to 82 (GDHLLGTKR) are Cytoplasmic-facing. Residues 83-103 (TIVLGAIVLAIGYFMTGLSIL) form a helical membrane-spanning segment. Residues 104-106 (HPN) are Periplasmic-facing. Residues 107–127 (LIFYALGTIAVGNGLFKANPA) form a helical membrane-spanning segment. Over 128-146 (SLLSKCYPPKDPRLDGAFT) the chain is Cytoplasmic. Residues 147–167 (LFYMSINLGSLFSLALAPVIA) traverse the membrane as a helical segment. At 168–172 (EKFSY) the chain is on the periplasmic side. Residues 173 to 193 (AVTYNICGIGLIIALLVYIFC) form a helical membrane-spanning segment. Residues 194 to 211 (RNTVRNIGSEPDHQRINY) lie on the Cytoplasmic side of the membrane. The helical transmembrane segment at 212–232 (TNLFLVVAGSVVMVYVCAWLM) threads the bilayer. A topological domain (periplasmic) is located at residue H233. A helical membrane pass occupies residues 234-254 (NVKIANIMLITLSVIVVFIFF). The Cytoplasmic segment spans residues 255-267 (REALKQDKIGRNK). A helical membrane pass occupies residues 268 to 288 (MFVAFILMLQAIVFFILYAQM). At 289–311 (PTSLNFFAIHNVHHQLLGFNINP) the chain is on the periplasmic side. Residues 312-332 (VSFQALNPFWIVVASPILAVL) traverse the membrane as a helical segment. Topologically, residues 333 to 348 (YTHWGAKGKDLTMPAK) are cytoplasmic. Residues 349–369 (FAVGMFLCSLGFLTAAAAGLW) form a helical membrane-spanning segment. At 370–375 (FADEQG) the chain is on the periplasmic side. A helical transmembrane segment spans residues 376 to 396 (LTSAWFIVLVYLFQGVGELMI). Over 397-419 (SALGLAMIAALVPQYLMGFILGM) the chain is Cytoplasmic. Residues 420-440 (WYLTQATSSLLGGYVAALTAA) form a helical membrane-spanning segment. Residues 441–456 (PKGITDPLQTLPVYTS) are Periplasmic-facing. A helical membrane pass occupies residues 457–477 (VFGKIGIATFIVAIIMAATVP). At 478–486 (LLNRMMQEK) the chain is on the cytoplasmic side.

This sequence belongs to the major facilitator superfamily. Proton-dependent oligopeptide transporter (POT/PTR) (TC 2.A.17) family. DtpB subfamily.

The protein localises to the cell inner membrane. In terms of biological role, proton-dependent permease that transports di- and tripeptides. The chain is Dipeptide and tripeptide permease B from Photorhabdus luminescens (Xenorhabdus luminescens).